A 522-amino-acid polypeptide reads, in one-letter code: 2-isopropylmalate synthase (522 aa).

Residues 5 to 267 (VIIFDTTLRD…ETGINAKEIH (263 aa)) enclose the Pyruvate carboxyltransferase domain. The Mn(2+) site is built by aspartate 14, histidine 202, histidine 204, and asparagine 238. The regulatory domain stretch occupies residues 392-522 (QLQQLVVQSD…MQKNRELGGV (131 aa)).

The protein belongs to the alpha-IPM synthase/homocitrate synthase family. LeuA type 1 subfamily. Homodimer. It depends on Mn(2+) as a cofactor.

It is found in the cytoplasm. The catalysed reaction is 3-methyl-2-oxobutanoate + acetyl-CoA + H2O = (2S)-2-isopropylmalate + CoA + H(+). The protein operates within amino-acid biosynthesis; L-leucine biosynthesis; L-leucine from 3-methyl-2-oxobutanoate: step 1/4. Catalyzes the condensation of the acetyl group of acetyl-CoA with 3-methyl-2-oxobutanoate (2-ketoisovalerate) to form 3-carboxy-3-hydroxy-4-methylpentanoate (2-isopropylmalate). This is 2-isopropylmalate synthase from Shewanella baltica (strain OS155 / ATCC BAA-1091).